The sequence spans 101 residues: UPF0235 protein Maeo_0841 (101 aa).

Belongs to the UPF0235 family.

This is UPF0235 protein Maeo_0841 from Methanococcus aeolicus (strain ATCC BAA-1280 / DSM 17508 / OCM 812 / Nankai-3).